The primary structure comprises 328 residues: MRTRHGAFLLLARPATERAHTPEQDQYTLPTLTHLDRLEAESLHILREVAAECEKPVMLYSIGKDSAVMLHLAMKAFYPARPPFPLLHVDTGWKFREMIAFRDRKVKELGLELLVHMNEDGVREGVGPFTHGSAYHTDVMKTAALKQALDKYGFDAAFGGARRDEEKSRAKERVISFRSAGHRWDPKRQRPEIWNLYNTRMHKGESLRAFPLSNWTELDIWQYIRREGIELVPLYLAAPRPVVTWNDTLIMVDDDRVPAEIAAKAEVKSVRFRTLGCYPLTGAVESTATTLDDVIQEILLTTTSERQGRAIDKDQTASMEKKKQEGYF.

A disordered region spans residues 309–328 (RAIDKDQTASMEKKKQEGYF).

The protein belongs to the PAPS reductase family. CysD subfamily. As to quaternary structure, heterodimer composed of CysD, the smaller subunit, and CysN.

The catalysed reaction is sulfate + ATP + H(+) = adenosine 5'-phosphosulfate + diphosphate. It functions in the pathway sulfur metabolism; hydrogen sulfide biosynthesis; sulfite from sulfate: step 1/3. Its function is as follows. With CysN forms the ATP sulfurylase (ATPS) that catalyzes the adenylation of sulfate producing adenosine 5'-phosphosulfate (APS) and diphosphate, the first enzymatic step in sulfur assimilation pathway. APS synthesis involves the formation of a high-energy phosphoric-sulfuric acid anhydride bond driven by GTP hydrolysis by CysN coupled to ATP hydrolysis by CysD. This chain is Sulfate adenylyltransferase subunit 2, found in Hyphomonas neptunium (strain ATCC 15444).